The following is a 76-amino-acid chain: U1-cyrtautoxin-As1d (76 aa).

4 cysteine pairs are disulfide-bonded: Cys-23–Cys-37, Cys-30–Cys-51, Cys-36–Cys-66, and Cys-69–Cys-76.

The protein belongs to the neurotoxin 21 family. As to expression, expressed by the venom gland.

It localises to the secreted. Its function is as follows. Neurotoxin with probable ion channel impairing activity. In vivo, is both paralytic and lethal, when injected into lepidopteran larvae. This is U1-cyrtautoxin-As1d from Apomastus schlingeri (Trap-door spider).